The chain runs to 422 residues: Platelet-activating factor acetylhydrolase (422 aa).

The signal sequence occupies residues Met1–Ser21. The Nucleophile role is filled by Ser266. The Charge relay system role is filled by Asp289. Residue Asn331 is glycosylated (N-linked (GlcNAc...) asparagine). His345 acts as the Charge relay system in catalysis.

It belongs to the AB hydrolase superfamily. Lipase family. In terms of tissue distribution, plasma.

The protein localises to the secreted. It localises to the extracellular space. The enzyme catalyses a 1-O-alkyl-2-acetyl-sn-glycero-3-phosphocholine + H2O = a 1-O-alkyl-sn-glycero-3-phosphocholine + acetate + H(+). Modulates the action of platelet-activating factor (PAF) by hydrolyzing the sn-2 ester bond to yield the biologically inactive lyso-PAF. Has a specificity for substrates with a short residue at the sn-2 position. It is inactive against long-chain phospholipids. This is Platelet-activating factor acetylhydrolase (PLA2G7) from Gallus gallus (Chicken).